Reading from the N-terminus, the 376-residue chain is Salivary hyaluronidase (376 aa).

Residues methionine 1 to cysteine 16 form the signal peptide. 2 cysteine pairs are disulfide-bonded: cysteine 32–cysteine 328 and cysteine 203–cysteine 217. Residues asparagine 36, asparagine 55, asparagine 77, and asparagine 88 are each glycosylated (N-linked (GlcNAc...) asparagine). Catalysis depends on glutamate 118, which acts as the Proton donor. 11 N-linked (GlcNAc...) asparagine glycosylation sites follow: asparagine 143, asparagine 153, asparagine 181, asparagine 214, asparagine 226, asparagine 248, asparagine 287, asparagine 321, asparagine 336, asparagine 356, and asparagine 371.

The protein belongs to the glycosyl hydrolase 56 family. Glycosylated; glycosylation is critical for enzymatic activity. In terms of tissue distribution, female salivary gland (at protein level).

It localises to the secreted. It catalyses the reaction Random hydrolysis of (1-&gt;4)-linkages between N-acetyl-beta-D-glucosamine and D-glucuronate residues in hyaluronate.. Hydrolyzes high molecular weight hyaluronic acid to produce small oligosaccharides. Up-regulates expression of CSF2, CSF3, LIF, CXCL1, CXCL2 and CXCL8 in cultured human dermal microvascular endothelial cells. Promotes host neutrophil recruitment at the injection site. In terms of biological role, (Microbial infection) Probably promotes Leishmania major infection in the host. This Lutzomyia longipalpis (Sand fly) protein is Salivary hyaluronidase.